The following is a 124-amino-acid chain: Probable glycine cleavage system H protein (124 aa).

In terms of domain architecture, Lipoyl-binding spans 23-104 (VATVGITDYA…PYKNWLVKIR (82 aa)). At Lys-64 the chain carries N6-lipoyllysine.

This sequence belongs to the GcvH family. As to quaternary structure, the glycine cleavage system is composed of four proteins: P, T, L and H. It depends on (R)-lipoate as a cofactor.

Functionally, the glycine cleavage system catalyzes the degradation of glycine. The H protein shuttles the methylamine group of glycine from the P protein to the T protein. The chain is Probable glycine cleavage system H protein from Picrophilus torridus (strain ATCC 700027 / DSM 9790 / JCM 10055 / NBRC 100828 / KAW 2/3).